The chain runs to 225 residues: NAD(P)H-quinone oxidoreductase subunit K, chloroplastic (225 aa).

Positions 43, 44, 108, and 139 each coordinate [4Fe-4S] cluster.

It belongs to the complex I 20 kDa subunit family. As to quaternary structure, NDH is composed of at least 16 different subunits, 5 of which are encoded in the nucleus. Requires [4Fe-4S] cluster as cofactor.

It is found in the plastid. The protein resides in the chloroplast thylakoid membrane. The catalysed reaction is a plastoquinone + NADH + (n+1) H(+)(in) = a plastoquinol + NAD(+) + n H(+)(out). It carries out the reaction a plastoquinone + NADPH + (n+1) H(+)(in) = a plastoquinol + NADP(+) + n H(+)(out). NDH shuttles electrons from NAD(P)H:plastoquinone, via FMN and iron-sulfur (Fe-S) centers, to quinones in the photosynthetic chain and possibly in a chloroplast respiratory chain. The immediate electron acceptor for the enzyme in this species is believed to be plastoquinone. Couples the redox reaction to proton translocation, and thus conserves the redox energy in a proton gradient. The sequence is that of NAD(P)H-quinone oxidoreductase subunit K, chloroplastic from Amborella trichopoda.